The primary structure comprises 31 residues: Photosystem II reaction center protein T (31 aa).

The helical transmembrane segment at A3 to F23 threads the bilayer.

The protein belongs to the PsbT family. PSII is composed of 1 copy each of membrane proteins PsbA, PsbB, PsbC, PsbD, PsbE, PsbF, PsbH, PsbI, PsbJ, PsbK, PsbL, PsbM, PsbT, PsbY, PsbZ, Psb30/Ycf12, at least 3 peripheral proteins of the oxygen-evolving complex and a large number of cofactors. It forms dimeric complexes.

Its subcellular location is the plastid. It is found in the chloroplast thylakoid membrane. Its function is as follows. Found at the monomer-monomer interface of the photosystem II (PS II) dimer, plays a role in assembly and dimerization of PSII. PSII is a light-driven water plastoquinone oxidoreductase, using light energy to abstract electrons from H(2)O, generating a proton gradient subsequently used for ATP formation. The sequence is that of Photosystem II reaction center protein T from Mesostigma viride (Green alga).